The primary structure comprises 239 residues: Ubiquinone biosynthesis O-methyltransferase (239 aa).

The S-adenosyl-L-methionine site is built by arginine 44, glycine 63, aspartate 84, and methionine 128.

It belongs to the methyltransferase superfamily. UbiG/COQ3 family.

It catalyses the reaction a 3-demethylubiquinol + S-adenosyl-L-methionine = a ubiquinol + S-adenosyl-L-homocysteine + H(+). The enzyme catalyses a 3-(all-trans-polyprenyl)benzene-1,2-diol + S-adenosyl-L-methionine = a 2-methoxy-6-(all-trans-polyprenyl)phenol + S-adenosyl-L-homocysteine + H(+). Its pathway is cofactor biosynthesis; ubiquinone biosynthesis. O-methyltransferase that catalyzes the 2 O-methylation steps in the ubiquinone biosynthetic pathway. The polypeptide is Ubiquinone biosynthesis O-methyltransferase (Xanthomonas euvesicatoria pv. vesicatoria (strain 85-10) (Xanthomonas campestris pv. vesicatoria)).